A 492-amino-acid polypeptide reads, in one-letter code: Dipeptide permease D (492 aa).

The next 13 helical transmembrane spans lie at 14–34, 49–69, 91–111, 138–158, 167–187, 212–232, 236–256, 269–289, 312–332, 344–364, 379–399, 413–433, and 458–478; these read VVAL…LLIL, ALFS…GYLA, LVLG…AIIV, GGFS…PIAC, WAMG…IFLC, NWGW…VLFW, SVYA…RIYL, LIVV…QGGS, MFQS…AWLV, IWGK…ILTL, LMVL…PVAM, VLTG…AGVI, and VFSQ…VIWL.

Belongs to the major facilitator superfamily. Proton-dependent oligopeptide transporter (POT/PTR) (TC 2.A.17) family. DtpD subfamily.

It is found in the cell inner membrane. In terms of biological role, probable proton-dependent permease that transports dipeptides. The polypeptide is Dipeptide permease D (Klebsiella pneumoniae (strain 342)).